We begin with the raw amino-acid sequence, 180 residues long: MPLLNSVTTPYAEALLQVVNENSQTEEMVSEVKQLLELVNDSPELEKALSSPILETDAKKKIIIEIFSNKVNSSLLNFLKLLADRQRIGILTSILDRFLEIYRENSNIALATVTSAVELTDEQKGLITKKIINIAGTEKLELVTKIDPSLIGGFVASVGSKVIDASLASQIRKLGLTLSK.

This sequence belongs to the ATPase delta chain family. F-type ATPases have 2 components, F(1) - the catalytic core - and F(0) - the membrane proton channel. F(1) has five subunits: alpha(3), beta(3), gamma(1), delta(1), epsilon(1). CF(0) has four main subunits: a(1), b(1), b'(1) and c(10-14). The alpha and beta chains form an alternating ring which encloses part of the gamma chain. F(1) is attached to F(0) by a central stalk formed by the gamma and epsilon chains, while a peripheral stalk is formed by the delta, b and b' chains.

The protein localises to the cellular thylakoid membrane. F(1)F(0) ATP synthase produces ATP from ADP in the presence of a proton or sodium gradient. F-type ATPases consist of two structural domains, F(1) containing the extramembraneous catalytic core and F(0) containing the membrane proton channel, linked together by a central stalk and a peripheral stalk. During catalysis, ATP synthesis in the catalytic domain of F(1) is coupled via a rotary mechanism of the central stalk subunits to proton translocation. In terms of biological role, this protein is part of the stalk that links CF(0) to CF(1). It either transmits conformational changes from CF(0) to CF(1) or is implicated in proton conduction. This chain is ATP synthase subunit delta, found in Prochlorococcus marinus (strain AS9601).